Here is a 144-residue protein sequence, read N- to C-terminus: Large ribosomal subunit protein uL13 (144 aa).

This sequence belongs to the universal ribosomal protein uL13 family. Part of the 50S ribosomal subunit.

Its function is as follows. This protein is one of the early assembly proteins of the 50S ribosomal subunit, although it is not seen to bind rRNA by itself. It is important during the early stages of 50S assembly. This Legionella pneumophila (strain Paris) protein is Large ribosomal subunit protein uL13.